The chain runs to 378 residues: Spermidine/putrescine import ATP-binding protein PotA (378 aa).

Positions 18 to 248 constitute an ABC transporter domain; the sequence is VQLAGIRKCF…PKNLFVAGFI (231 aa). 50–57 lines the ATP pocket; it reads GPSGCGKT.

The protein belongs to the ABC transporter superfamily. Spermidine/putrescine importer (TC 3.A.1.11.1) family. As to quaternary structure, the complex is composed of two ATP-binding proteins (PotA), two transmembrane proteins (PotB and PotC) and a solute-binding protein (PotD).

It is found in the cell inner membrane. The catalysed reaction is ATP + H2O + polyamine-[polyamine-binding protein]Side 1 = ADP + phosphate + polyamineSide 2 + [polyamine-binding protein]Side 1.. In terms of biological role, part of the ABC transporter complex PotABCD involved in spermidine/putrescine import. Responsible for energy coupling to the transport system. The chain is Spermidine/putrescine import ATP-binding protein PotA from Shigella boydii serotype 4 (strain Sb227).